We begin with the raw amino-acid sequence, 431 residues long: UDP-N-acetylmuramate--L-alanine ligase (431 aa).

Residue 108–114 (GSHGKTS) participates in ATP binding.

The protein belongs to the MurCDEF family.

It is found in the cytoplasm. It carries out the reaction UDP-N-acetyl-alpha-D-muramate + L-alanine + ATP = UDP-N-acetyl-alpha-D-muramoyl-L-alanine + ADP + phosphate + H(+). The protein operates within cell wall biogenesis; peptidoglycan biosynthesis. Functionally, cell wall formation. The chain is UDP-N-acetylmuramate--L-alanine ligase from Macrococcus caseolyticus (strain JCSC5402) (Macrococcoides caseolyticum).